The sequence spans 121 residues: Small ribosomal subunit protein uS13 (121 aa).

Residues 93–121 (RGLPVRGQNSKNNARTRKGPRRTVANKKK) form a disordered region. A compositionally biased stretch (basic residues) spans 106 to 121 (ARTRKGPRRTVANKKK).

It belongs to the universal ribosomal protein uS13 family. As to quaternary structure, part of the 30S ribosomal subunit. Forms a loose heterodimer with protein S19. Forms two bridges to the 50S subunit in the 70S ribosome.

Located at the top of the head of the 30S subunit, it contacts several helices of the 16S rRNA. In the 70S ribosome it contacts the 23S rRNA (bridge B1a) and protein L5 of the 50S subunit (bridge B1b), connecting the 2 subunits; these bridges are implicated in subunit movement. Contacts the tRNAs in the A and P-sites. The sequence is that of Small ribosomal subunit protein uS13 from Bacillus subtilis (strain 168).